Reading from the N-terminus, the 210-residue chain is MKPASVIIMDEHPIVRMSIEVLLGKNSNIQVVLKTDDSRTAIEYLRTYPVDLVILDIELPGTDGFTLLKRIKSIQEHTRILFLSSKSEAFYAGRAIRAGANGFVSKRKDLNDIYNAVKMILSGYSFFPSETLNFISNTRTPKGGHHDMPLSNREVTVLRYLANGMSNKEIAEQLLLSNKTISAHKANIFSKLGLHSIVELIDYAKSHELL.

Positions 5–121 (SVIIMDEHPI…DIYNAVKMIL (117 aa)) constitute a Response regulatory domain. Residue Asp56 is modified to 4-aspartylphosphate. Residues 143–208 (GGHHDMPLSN…ELIDYAKSHE (66 aa)) enclose the HTH luxR-type domain. Positions 167–186 (NKEIAEQLLLSNKTISAHKA) form a DNA-binding region, H-T-H motif.

Its subcellular location is the cytoplasm. The sequence is that of Fimbriae Z protein (fimZ) from Salmonella typhimurium (strain LT2 / SGSC1412 / ATCC 700720).